A 270-amino-acid polypeptide reads, in one-letter code: Glucosamine-6-phosphate deaminase (270 aa).

Residue Asp-72 is the Proton acceptor; for enolization step of the active site. The active-site For ring-opening step is the Asp-141. His-143 (proton acceptor; for ring-opening step) is an active-site residue. Catalysis depends on Glu-148, which acts as the For ring-opening step.

It belongs to the glucosamine/galactosamine-6-phosphate isomerase family. NagB subfamily. As to quaternary structure, homohexamer.

It carries out the reaction alpha-D-glucosamine 6-phosphate + H2O = beta-D-fructose 6-phosphate + NH4(+). It participates in amino-sugar metabolism; N-acetylneuraminate degradation; D-fructose 6-phosphate from N-acetylneuraminate: step 5/5. With respect to regulation, allosterically activated by N-acetylglucosamine 6-phosphate (GlcNAc6P). Its function is as follows. Catalyzes the reversible isomerization-deamination of glucosamine 6-phosphate (GlcN6P) to form fructose 6-phosphate (Fru6P) and ammonium ion. The polypeptide is Glucosamine-6-phosphate deaminase (Haemophilus influenzae (strain 86-028NP)).